Consider the following 224-residue polypeptide: 7-cyano-7-deazaguanine synthase (224 aa).

Residue 10–20 coordinates ATP; the sequence is LSGGLDSATVV. Positions 189, 199, 202, and 205 each coordinate Zn(2+).

This sequence belongs to the QueC family. Zn(2+) is required as a cofactor.

The catalysed reaction is 7-carboxy-7-deazaguanine + NH4(+) + ATP = 7-cyano-7-deazaguanine + ADP + phosphate + H2O + H(+). It participates in purine metabolism; 7-cyano-7-deazaguanine biosynthesis. In terms of biological role, catalyzes the ATP-dependent conversion of 7-carboxy-7-deazaguanine (CDG) to 7-cyano-7-deazaguanine (preQ(0)). The chain is 7-cyano-7-deazaguanine synthase from Pseudomonas paraeruginosa (strain DSM 24068 / PA7) (Pseudomonas aeruginosa (strain PA7)).